The following is a 260-amino-acid chain: Ribonuclease HII (260 aa).

The RNase H type-2 domain maps to Leu-73–Val-260. Residues Asp-79, Glu-80, and Asp-171 each contribute to the a divalent metal cation site.

Belongs to the RNase HII family. Requires Mn(2+) as cofactor. The cofactor is Mg(2+).

The protein localises to the cytoplasm. The catalysed reaction is Endonucleolytic cleavage to 5'-phosphomonoester.. In terms of biological role, endonuclease that specifically degrades the RNA of RNA-DNA hybrids. The sequence is that of Ribonuclease HII from Desulfitobacterium hafniense (strain Y51).